A 147-amino-acid chain; its full sequence is DNA polymerase epsilon subunit 3 (147 aa).

The residue at position 2 (alanine 2) is an N-acetylalanine. The residue at position 83 (threonine 83) is a Phosphothreonine. A coiled-coil region spans residues 85 to 146; that stretch reads LKEALEAYRR…EEQNEEEEVD (62 aa). Basic and acidic residues predominate over residues 93 to 124; that stretch reads RREQKGKKEASEQKKKDKDKKTDSEEQDKSRD. The tract at residues 93 to 147 is disordered; it reads RREQKGKKEASEQKKKDKDKKTDSEEQDKSRDEDNDEDEERLEEEEQNEEEEVDN. Serine 122 carries the phosphoserine modification. Over residues 125–147 the composition is skewed to acidic residues; the sequence is EDNDEDEERLEEEEQNEEEEVDN.

As to quaternary structure, component of the DNA polymerase epsilon complex consisting of four subunits: the catalytic subunit POLE and the accessory subunits POLE2, POLE3 and POLE4. Interaction with POLE4 is a prerequisite for further binding with POLE and POLE2. Heterodimer with CHRAC1; binds to DNA. Component of the CHRAC ISWI chromatin remodeling complex at least composed of SMARCA5/SNF2H, BAZ1A/ACF1, CHRAC1 and POLE3; the complex preferentially binds DNA through the CHRAC1-POLE3 heterodimer and possesses ATP-dependent nucleosome-remodeling activity. Within the complex, the heterodimer with CHRAC1 interacts with SMARCA5/SNF2H; the interaction is direct and enhances nucleosome sliding activity by the SMARCA5/SNF2H and BAZ1A/ACF1 interaction. Within the complex, the heterodimer with CHRAC1 interacts with BAZ1A/ACF1; the interactions are direct.

The protein localises to the nucleus. Functionally, accessory component of the DNA polymerase epsilon complex. Participates in DNA repair and in chromosomal DNA replication. Forms a complex with CHRAC1 and binds naked DNA, which is then incorporated into chromatin, aided by the nucleosome-remodeling activity of ISWI/SNF2H and ACF1. Does not enhance nucleosome sliding activity of the ACF-5 ISWI chromatin remodeling complex. This Bos taurus (Bovine) protein is DNA polymerase epsilon subunit 3 (POLE3).